The sequence spans 939 residues: Valine--tRNA ligase (939 aa).

Positions 47–57 (PNVTGILHMGH) match the 'HIGH' region motif. The 'KMSKS' region signature appears at 563 to 567 (KLSKS). Residue Lys-566 participates in ATP binding. Residues 874–939 (EHLAKERVRL…QSILDKLASL (66 aa)) are a coiled coil.

Belongs to the class-I aminoacyl-tRNA synthetase family. ValS type 1 subfamily. Monomer.

The protein localises to the cytoplasm. It carries out the reaction tRNA(Val) + L-valine + ATP = L-valyl-tRNA(Val) + AMP + diphosphate. Functionally, catalyzes the attachment of valine to tRNA(Val). As ValRS can inadvertently accommodate and process structurally similar amino acids such as threonine, to avoid such errors, it has a 'posttransfer' editing activity that hydrolyzes mischarged Thr-tRNA(Val) in a tRNA-dependent manner. The chain is Valine--tRNA ligase from Chlamydia trachomatis serovar A (strain ATCC VR-571B / DSM 19440 / HAR-13).